Reading from the N-terminus, the 463-residue chain is tRNA (guanine(10)-N(2))-methyltransferase TRMT11 (463 aa).

Alanine 2 carries the post-translational modification N-acetylalanine.

This sequence belongs to the class I-like SAM-binding methyltransferase superfamily. TRM11 methyltransferase family. In terms of assembly, part of the heterodimeric TRMT11-TRM112 methyltransferase complex; this complex forms an active tRNA methyltransferase, where TRMT112 acts as an activator of the catalytic subunit TRMT11.

The protein localises to the cytoplasm. It catalyses the reaction guanosine(10) in tRNA + S-adenosyl-L-methionine = N(2)-methylguanosine(10) in tRNA + S-adenosyl-L-homocysteine + H(+). Functionally, catalytic subunit of the TRMT11-TRM112 methyltransferase complex, that specifically mediates the S-adenosyl-L-methionine-dependent N(2)-methylation of guanosine nucleotide at position 10 (m2G10) in tRNAs. This is one of the major tRNA (guanine-N(2))-methyltransferases. This is tRNA (guanine(10)-N(2))-methyltransferase TRMT11 from Pongo abelii (Sumatran orangutan).